Here is an 853-residue protein sequence, read N- to C-terminus: FIGNL1-interacting regulator of recombination and mitosis (853 aa).

A phosphoserine; by PLK1 mark is found at serine 43 and serine 744. An N6-acetyllysine modification is found at lysine 792.

In terms of assembly, interacts (via its N-terminal region) with PLK1; controls PLK1 kinase activity. Interacts (via the KVVXF motif) with PPP1CC; controls PLK1 kinase activity. Interacts with FIGNL1; may regulate homologous recombination. Phosphorylation at Ser-43 by PLK1 strengthens FIRRM-PLK1 interaction. Phosphorylation at Ser-744 by PLK1 negatively regulates its interaction with PPP1CC.

It is found in the chromosome. It localises to the centromere. Its subcellular location is the kinetochore. The protein resides in the nucleus. The protein localises to the midbody. It is found in the cytoplasm. It localises to the cytoskeleton. Its subcellular location is the spindle. Its function is as follows. Regulates PLK1 kinase activity at kinetochores and promotes faithful chromosome segregation in prometaphase by bridging kinase and phosphatase activities. Phosphorylation of FIRRM by PLK1 negatively regulates its interaction with the phosphatase, PPP1CC, thus creating a negative feedback loop for maintaining proper PLK1 kinase activity during mitosis. In complex with FIGL1 may regulate homologous recombination. In Homo sapiens (Human), this protein is FIGNL1-interacting regulator of recombination and mitosis.